Here is a 563-residue protein sequence, read N- to C-terminus: O-fucosyltransferase 14 (563 aa).

The segment covering 1-16 (MVKVSSSTTSSSSSSS) has biased composition (low complexity). The segment at 1 to 25 (MVKVSSSTTSSSSSSSPDEESDLQN) is disordered. The helical; Signal-anchor for type II membrane protein transmembrane segment at 73 to 93 (IFIFLPIVIILIYLSTDFSNY) threads the bilayer. N-linked (GlcNAc...) asparagine glycans are attached at residues Asn135, Asn140, and Asn339. Substrate is bound by residues 412–414 (HFR) and 528–529 (TF).

Belongs to the glycosyltransferase GT106 family.

It localises to the membrane. It participates in glycan metabolism. This Arabidopsis thaliana (Mouse-ear cress) protein is O-fucosyltransferase 14.